Consider the following 78-residue polypeptide: Neurotoxin 3FTx-LK (78 aa).

An N-terminal signal peptide occupies residues 1–21 (MKTLLLTLVVVTIVCLDLGYT). Disulfide bonds link Cys24-Cys42, Cys35-Cys60, Cys64-Cys70, and Cys71-Cys76.

As to expression, expressed by the venom gland.

The protein localises to the secreted. Its function is as follows. Blocks both the muscle-twitch response to nerve stimulation and the response to exogenous acetylcholine. In Bungarus fasciatus (Banded krait), this protein is Neurotoxin 3FTx-LK.